The sequence spans 89 residues: Small ribosomal subunit protein uS15 (89 aa).

This sequence belongs to the universal ribosomal protein uS15 family. As to quaternary structure, part of the 30S ribosomal subunit. Forms a bridge to the 50S subunit in the 70S ribosome, contacting the 23S rRNA.

Its function is as follows. One of the primary rRNA binding proteins, it binds directly to 16S rRNA where it helps nucleate assembly of the platform of the 30S subunit by binding and bridging several RNA helices of the 16S rRNA. Functionally, forms an intersubunit bridge (bridge B4) with the 23S rRNA of the 50S subunit in the ribosome. The chain is Small ribosomal subunit protein uS15 from Kocuria rhizophila (strain ATCC 9341 / DSM 348 / NBRC 103217 / DC2201).